A 476-amino-acid chain; its full sequence is Adenosylhomocysteinase (476 aa).

Substrate contacts are provided by Thr-67, Asp-142, and Glu-202. 203–205 (TTT) contributes to the NAD(+) binding site. Substrate contacts are provided by Lys-232 and Asp-236. Residues Asn-237, 266 to 271 (GYGDVG), Glu-289, Asn-324, 345 to 347 (IGH), and Asn-390 contribute to the NAD(+) site.

Belongs to the adenosylhomocysteinase family. Requires NAD(+) as cofactor.

The protein localises to the cytoplasm. The enzyme catalyses S-adenosyl-L-homocysteine + H2O = L-homocysteine + adenosine. The protein operates within amino-acid biosynthesis; L-homocysteine biosynthesis; L-homocysteine from S-adenosyl-L-homocysteine: step 1/1. Its function is as follows. May play a key role in the regulation of the intracellular concentration of adenosylhomocysteine. This is Adenosylhomocysteinase from Prochlorococcus marinus (strain MIT 9303).